Reading from the N-terminus, the 65-residue chain is Beta-defensin 106A (65 aa).

An N-terminal signal peptide occupies residues 1–20; sequence MRTFLFLFAVLFFLTPAKNA. Cystine bridges form between C26–C53, C33–C47, and C37–C54.

This sequence belongs to the beta-defensin family. As to quaternary structure, monomer. Interacts with CCR2 (via extracellular N-terminal region); this interaction may preferentially require specific tyrosine sulfation on CCR2.

Its subcellular location is the secreted. It is found in the membrane. Has antibacterial activity. Acts as a ligand for C-C chemokine receptor CCR2. The chain is Beta-defensin 106A (DEFB106A) from Gorilla gorilla gorilla (Western lowland gorilla).